The sequence spans 231 residues: F-box protein SKIP8 (231 aa).

The interval 1 to 24 (MPSTPLANGGTPPMGGGERTTVTT) is disordered. The F-box domain maps to 34 to 80 (VSMMEQLVPEITTHALSYLDYPSLCRLSMTNSLMRKAANDDNAWKAL).

As to quaternary structure, part of a SCF (ASK-cullin-F-box) protein ligase complex. Interacts with SKP1A/ASK1.

It functions in the pathway protein modification; protein ubiquitination. Functionally, component of SCF(ASK-cullin-F-box) E3 ubiquitin ligase complexes, which may mediate the ubiquitination and subsequent proteasomal degradation of target proteins. This Arabidopsis thaliana (Mouse-ear cress) protein is F-box protein SKIP8 (SKIP8).